Reading from the N-terminus, the 185-residue chain is Ribosome-recycling factor (185 aa).

This sequence belongs to the RRF family.

Its subcellular location is the cytoplasm. Responsible for the release of ribosomes from messenger RNA at the termination of protein biosynthesis. May increase the efficiency of translation by recycling ribosomes from one round of translation to another. In Symbiobacterium thermophilum (strain DSM 24528 / JCM 14929 / IAM 14863 / T), this protein is Ribosome-recycling factor.